The primary structure comprises 372 residues: NAD(P)H-quinone oxidoreductase subunit 1 (372 aa).

8 helical membrane passes run 27 to 47 (IIWLPLPMLLVLVSAVVGVLV), 97 to 117 (ILFTAGPILVLVPVILSWLIV), 128 to 148 (VGIGIFLWIALSSIQPIGLLM), 176 to 196 (LALSVLAIVLMTNSLSTIDIV), 204 to 224 (ILSWNIWRQPVGFIIFWICAL), 266 to 286 (ILSALLVSILYLGGWGFPIPV), 308 to 328 (SIGIIMTVLKAYLLVFVAILL), and 347 to 367 (FLLPISLANLLVTAGLKLAFP).

It belongs to the complex I subunit 1 family. As to quaternary structure, NDH-1 is composed of at least 11 different subunits.

It localises to the cellular thylakoid membrane. The catalysed reaction is a plastoquinone + NADH + (n+1) H(+)(in) = a plastoquinol + NAD(+) + n H(+)(out). It carries out the reaction a plastoquinone + NADPH + (n+1) H(+)(in) = a plastoquinol + NADP(+) + n H(+)(out). Functionally, NDH-1 shuttles electrons from an unknown electron donor, via FMN and iron-sulfur (Fe-S) centers, to quinones in the respiratory and/or the photosynthetic chain. The immediate electron acceptor for the enzyme in this species is believed to be plastoquinone. Couples the redox reaction to proton translocation, and thus conserves the redox energy in a proton gradient. The chain is NAD(P)H-quinone oxidoreductase subunit 1 from Prochlorococcus marinus subsp. pastoris (strain CCMP1986 / NIES-2087 / MED4).